A 65-amino-acid polypeptide reads, in one-letter code: Large ribosomal subunit protein uL29 (65 aa).

Belongs to the universal ribosomal protein uL29 family.

This Lactobacillus acidophilus (strain ATCC 700396 / NCK56 / N2 / NCFM) protein is Large ribosomal subunit protein uL29.